Here is a 304-residue protein sequence, read N- to C-terminus: N-carbamoyl-D-amino acid hydrolase (304 aa).

Residues 5-276 (MILAVGQQGP…DEVITAAVCL (272 aa)) form the CN hydrolase domain. Residues Glu-47, Lys-127, and Cys-172 contribute to the active site.

In terms of assembly, homotetramer.

It carries out the reaction an N-carbamoyl-D-amino acid + H2O + 2 H(+) = a D-alpha-amino acid + NH4(+) + CO2. With respect to regulation, the activity decreases with increasing concentration of H(2)O(2). Has 68% and 43% of activity remaining upon treatment with 0.1 and 0.2 mM H(2)O(2) for 30 minutes, respectively. Inhibited significantly by 2 mM Zn(2+), Cu(2+) and Ag(+), moderately by Co(2+), Mn(2+), Sn(2+) and Mg(2+), and only slightly by Ba(2+). Slightly activated by Fe(2+) and Ca(2+). No effect on activity by metal chelators EDTA and 8-hydroxyquinoline at 2 mM or by dithiothreitol, 2-mercaptoethanol or phenylmethanesulfonyl fluoride. Its function is as follows. Catalyzes the hydrolysis of N-carbamoyl-D-amino acids to the corresponding D-amino acids. Hydrolyzes aromatic and aliphatic N-carbamoyl-D-amino acids in vitro. Effectively hydrolyzes N-carbamoyl-D-p-hydroxyphenylglycine and N-carbamoyl-DL-p-hydroxyphenylglycine, and to a lesser extent N-carbamoyl-D-methionine. No activity for N-carbamoyl-L-amino acids, N-carbamoyl-beta-alanine or (RS)-alpha-ethyl-N-carbamoylphenylglycine in vitro. The polypeptide is N-carbamoyl-D-amino acid hydrolase (Ensifer adhaerens (Sinorhizobium morelense)).